Here is a 117-residue protein sequence, read N- to C-terminus: Putative pterin-4-alpha-carbinolamine dehydratase (117 aa).

The protein belongs to the pterin-4-alpha-carbinolamine dehydratase family.

The enzyme catalyses (4aS,6R)-4a-hydroxy-L-erythro-5,6,7,8-tetrahydrobiopterin = (6R)-L-erythro-6,7-dihydrobiopterin + H2O. The chain is Putative pterin-4-alpha-carbinolamine dehydratase from Aeromonas salmonicida (strain A449).